The primary structure comprises 211 residues: Germin-like protein subfamily 3 member 3 (211 aa).

A signal peptide spans 1-20 (MKMIIQIFFIISLISTISFA). Cysteine 26 and cysteine 41 are joined by a disulfide. The 147-residue stretch at 55-201 (TGLGTAGNTS…TTFLSDAEVK (147 aa)) folds into the Cupin type-1 domain. Asparagine 62 carries N-linked (GlcNAc...) asparagine glycosylation. The Mn(2+) site is built by histidine 103, histidine 105, and glutamate 110. Serine 140 is subject to Phosphoserine. Residue histidine 149 coordinates Mn(2+).

The protein belongs to the germin family. In terms of assembly, oligomer (believed to be a pentamer but probably hexamer). Expressed in leaves and flowers.

The protein localises to the secreted. It is found in the extracellular space. It localises to the apoplast. In terms of biological role, may play a role in plant defense. Probably has no oxalate oxidase activity even if the active site is conserved. The chain is Germin-like protein subfamily 3 member 3 (GER3) from Arabidopsis thaliana (Mouse-ear cress).